Consider the following 140-residue polypeptide: MAKKVAAVVKIQLPAGKATPAPPVGTALGPHGVNIMAFCKEFNERTAKDAGLIIPVVITIYADRSFSFITKTPPAAVLLKKAAGIESGSPQPNKQKVGKITREQLREIAEIKMKDLNASDIEAAMRMIAGTARSMGIEIV.

Belongs to the universal ribosomal protein uL11 family. As to quaternary structure, part of the ribosomal stalk of the 50S ribosomal subunit. Interacts with L10 and the large rRNA to form the base of the stalk. L10 forms an elongated spine to which L12 dimers bind in a sequential fashion forming a multimeric L10(L12)X complex. Post-translationally, one or more lysine residues are methylated.

In terms of biological role, forms part of the ribosomal stalk which helps the ribosome interact with GTP-bound translation factors. The polypeptide is Large ribosomal subunit protein uL11 (Thermoanaerobacter pseudethanolicus (strain ATCC 33223 / 39E) (Clostridium thermohydrosulfuricum)).